The primary structure comprises 353 residues: Ribosome biogenesis protein BRX1 homolog (353 aa).

Residues Met-1 to Gly-10 are compositionally biased toward basic residues. The interval Met-1–Arg-46 is disordered. Basic and acidic residues predominate over residues Arg-21 to Ala-36. The region spanning Glu-60–Gly-249 is the Brix domain. Lys-160 is covalently cross-linked (Glycyl lysine isopeptide (Lys-Gly) (interchain with G-Cter in SUMO2)). Position 261 is a phosphoserine (Ser-261). Lys-276 carries the post-translational modification N6-acetyllysine. Residues Lys-314 and Lys-322 each participate in a glycyl lysine isopeptide (Lys-Gly) (interchain with G-Cter in SUMO2) cross-link.

It belongs to the BRX1 family.

It is found in the nucleus. Its subcellular location is the nucleolus. Its function is as follows. Required for biogenesis of the 60S ribosomal subunit. This Homo sapiens (Human) protein is Ribosome biogenesis protein BRX1 homolog (BRIX1).